The chain runs to 1217 residues: Splicing factor 3B subunit 3 (1217 aa).

Interaction with PHF5A, SF3B1 and SF3B5 regions lie at residues 105-119 (ETFG…VPGQ) and 145-168 (NRDA…TLVY). Ser-156 bears the Phosphoserine mark. 2 interaction with SF3B1 and SF3B5 regions span residues 193-231 (DNDP…LEEH) and 786-804 (RKFV…ETDH). Residues 1028-1049 (TYPRWVTTASLLDYDTVAGADK) are interaction with SF3B1. The interaction with SF3B5 stretch occupies residues 1100–1123 (TVLSLQKTTLIPGGSESLVYTTLS). Thr-1200 is modified (phosphothreonine).

The protein belongs to the RSE1 family. In terms of assembly, component of the 17S U2 SnRNP complex, a ribonucleoprotein complex that contains small nuclear RNA (snRNA) U2 and a number of specific proteins. Part of the SF3B subcomplex of the 17S U2 SnRNP complex. SF3B associates with the splicing subcomplex SF3A and a 12S RNA unit to form the U2 small nuclear ribonucleoproteins complex (U2 snRNP). Within the SF3B subcomplex, interacts directly with SF3B1 (via HEAT domain), SF3B5 and PHF5A. Identified in the spliceosome A complex; remains associated with the spliceosome throughout the splicing process. Component of the spliceosome B complex. Identified in the spliceosome C complex. Identified in the spliceosome E complex. Component of the minor (U12-type spliceosome) spliceosome. Within this complex, interacts with SCNM1. Associates with the STAGA transcription coactivator-HAT complex. Interacts with SUPT3H. Interacts with TAF3.

The protein resides in the nucleus. Functionally, component of the 17S U2 SnRNP complex of the spliceosome, a large ribonucleoprotein complex that removes introns from transcribed pre-mRNAs. The 17S U2 SnRNP complex (1) directly participates in early spliceosome assembly and (2) mediates recognition of the intron branch site during pre-mRNA splicing by promoting the selection of the pre-mRNA branch-site adenosine, the nucleophile for the first step of splicing. Within the 17S U2 SnRNP complex, SF3B3 is part of the SF3B subcomplex, which is required for 'A' complex assembly formed by the stable binding of U2 snRNP to the branchpoint sequence in pre-mRNA. Sequence independent binding of SF3A and SF3B subcomplexes upstream of the branch site is essential, it may anchor U2 snRNP to the pre-mRNA. May also be involved in the assembly of the 'E' complex. Also acts as a component of the minor spliceosome, which is involved in the splicing of U12-type introns in pre-mRNAs. This is Splicing factor 3B subunit 3 (SF3B3) from Pongo abelii (Sumatran orangutan).